We begin with the raw amino-acid sequence, 284 residues long: L-ribulose-5-phosphate 3-epimerase UlaE (284 aa).

This sequence belongs to the L-ribulose-5-phosphate 3-epimerase family.

The catalysed reaction is L-ribulose 5-phosphate = L-xylulose 5-phosphate. It functions in the pathway cofactor degradation; L-ascorbate degradation; D-xylulose 5-phosphate from L-ascorbate: step 3/4. Its function is as follows. Catalyzes the isomerization of L-xylulose-5-phosphate to L-ribulose-5-phosphate. Is involved in the anaerobic L-ascorbate utilization. This chain is L-ribulose-5-phosphate 3-epimerase UlaE, found in Salmonella paratyphi A (strain AKU_12601).